The primary structure comprises 311 residues: Methionyl-tRNA formyltransferase (311 aa).

(6S)-5,6,7,8-tetrahydrofolate is bound at residue 109–112 (SLLP).

The protein belongs to the Fmt family.

It catalyses the reaction L-methionyl-tRNA(fMet) + (6R)-10-formyltetrahydrofolate = N-formyl-L-methionyl-tRNA(fMet) + (6S)-5,6,7,8-tetrahydrofolate + H(+). Functionally, attaches a formyl group to the free amino group of methionyl-tRNA(fMet). The formyl group appears to play a dual role in the initiator identity of N-formylmethionyl-tRNA by promoting its recognition by IF2 and preventing the misappropriation of this tRNA by the elongation apparatus. The chain is Methionyl-tRNA formyltransferase from Staphylococcus aureus (strain USA300).